The following is a 158-amino-acid chain: NAD(P)H-quinone oxidoreductase subunit J, chloroplastic (158 aa).

Belongs to the complex I 30 kDa subunit family. NDH is composed of at least 16 different subunits, 5 of which are encoded in the nucleus.

The protein resides in the plastid. Its subcellular location is the chloroplast thylakoid membrane. It catalyses the reaction a plastoquinone + NADH + (n+1) H(+)(in) = a plastoquinol + NAD(+) + n H(+)(out). The enzyme catalyses a plastoquinone + NADPH + (n+1) H(+)(in) = a plastoquinol + NADP(+) + n H(+)(out). In terms of biological role, NDH shuttles electrons from NAD(P)H:plastoquinone, via FMN and iron-sulfur (Fe-S) centers, to quinones in the photosynthetic chain and possibly in a chloroplast respiratory chain. The immediate electron acceptor for the enzyme in this species is believed to be plastoquinone. Couples the redox reaction to proton translocation, and thus conserves the redox energy in a proton gradient. This chain is NAD(P)H-quinone oxidoreductase subunit J, chloroplastic, found in Liriodendron tulipifera (Tuliptree).